The sequence spans 348 residues: Selenide, water dikinase (348 aa).

The active site involves Cys17. Residues Lys20 and 47–49 (THD) each bind ATP. Asp50 serves as a coordination point for Mg(2+). ATP-binding positions include Asp67, Asp90, and 138-140 (GHT). Mg(2+) is bound at residue Asp90. Asp226 contributes to the Mg(2+) binding site.

Belongs to the selenophosphate synthase 1 family. Class I subfamily. In terms of assembly, homodimer. Requires Mg(2+) as cofactor.

The catalysed reaction is hydrogenselenide + ATP + H2O = selenophosphate + AMP + phosphate + 2 H(+). Functionally, synthesizes selenophosphate from selenide and ATP. This Porphyromonas gingivalis (strain ATCC BAA-308 / W83) protein is Selenide, water dikinase.